Here is a 224-residue protein sequence, read N- to C-terminus: tRNA (guanine-N(7)-)-methyltransferase (224 aa).

S-adenosyl-L-methionine is bound by residues Glu-54, Glu-79, Glu-106, and Asp-129. Asp-129 is a catalytic residue. Positions 133 and 165 each coordinate substrate.

The protein belongs to the class I-like SAM-binding methyltransferase superfamily. TrmB family.

The enzyme catalyses guanosine(46) in tRNA + S-adenosyl-L-methionine = N(7)-methylguanosine(46) in tRNA + S-adenosyl-L-homocysteine. The protein operates within tRNA modification; N(7)-methylguanine-tRNA biosynthesis. Its function is as follows. Catalyzes the formation of N(7)-methylguanine at position 46 (m7G46) in tRNA. This Chlamydia muridarum (strain MoPn / Nigg) protein is tRNA (guanine-N(7)-)-methyltransferase.